Consider the following 456-residue polypeptide: Antigen Lp49 (456 aa).

The N-terminal stretch at Met-1–Ser-34 is a signal peptide. Cys-346 and Cys-347 are disulfide-bonded.

The protein resides in the cell outer membrane. Its function is as follows. May be involved in virulence. Binds human plasminogen (PLG) and stimulates its proteolytic cleavage to enzymatically active plasmin in the presence of an urokinase-type PLG activator in vitro. Activated plasmin has proteolytic activity which may help the bacteria to spread throughout the host by degrading extracellular matrix components, facilitating tissue penetration and invasion. This is Antigen Lp49 from Leptospira interrogans serogroup Icterohaemorrhagiae serovar copenhageni (strain Fiocruz L1-130).